The chain runs to 664 residues: UvrABC system protein C (664 aa).

The region spanning 63 to 141 (LRPGVYRMYD…IKRYRPPYNI (79 aa)) is the GIY-YIG domain. A UVR domain is found at 254–289 (THVQKKLVTAMEQASNDLNYELAAVYRDRLKALAFI).

Belongs to the UvrC family. Interacts with UvrB in an incision complex.

It localises to the cytoplasm. Functionally, the UvrABC repair system catalyzes the recognition and processing of DNA lesions. UvrC both incises the 5' and 3' sides of the lesion. The N-terminal half is responsible for the 3' incision and the C-terminal half is responsible for the 5' incision. The protein is UvrABC system protein C of Zymomonas mobilis subsp. mobilis (strain ATCC 31821 / ZM4 / CP4).